A 259-amino-acid polypeptide reads, in one-letter code: Tegument protein UL51 homolog (259 aa).

C9 carries the S-palmitoyl cysteine; by host lipid modification.

Belongs to the herpesviridae UL51 family. In terms of assembly, oligomerizes. Interacts with ORF53; this interaction mediates ORF53 incorporation to virions. In terms of processing, phosphorylated. Palmitoylation is necessary for Golgi localization.

It localises to the virion tegument. Its subcellular location is the host cytoplasm. The protein localises to the host Golgi apparatus. In terms of biological role, plays several roles during the time course of infection, including egress of virus particles from the perinuclear space and secondary envelopment of cytoplasmic capsids that bud into specific trans-Golgi network (TGN)-derived membranes. The chain is Tegument protein UL51 homolog from Varicella-zoster virus (strain Dumas) (HHV-3).